Consider the following 264-residue polypeptide: MNETPRVKLHGFNNLTKSLSFNMYDICYTKTAKEREAYIEYIDDVYNAERLTNILKRVADMIGAHVLNIAKQDYVPQGASVAMLVSEGPVVEVPEDDGPLPEAVVLSLDKSHITVHTYPEYHPNDGISTFRADIDVVTCGEISPLKALDYLIHSFDADIMIIDYRVRGFTRDIHGYKLFIDHDITSIQDYIPEHIREKYDMIDVNIYQENIFHTKCKLKQFDLDNYLFGYAKEDLSEQEANETTAKLRREMDEIFYGKNMPNTV.

Residue Ser111 is the Schiff-base intermediate with substrate; via pyruvic acid of the active site. The residue at position 111 (Ser111) is a Pyruvic acid (Ser); by autocatalysis. The active-site Proton acceptor; for processing activity is His116. The active-site Proton donor; for catalytic activity is the Cys139.

Belongs to the prokaryotic AdoMetDC family. Type 2 subfamily. As to quaternary structure, heterooctamer of four alpha and four beta chains arranged as a tetramer of alpha/beta heterodimers. Pyruvate serves as cofactor. In terms of processing, is synthesized initially as an inactive proenzyme. Formation of the active enzyme involves a self-maturation process in which the active site pyruvoyl group is generated from an internal serine residue via an autocatalytic post-translational modification. Two non-identical subunits are generated from the proenzyme in this reaction, and the pyruvate is formed at the N-terminus of the alpha chain, which is derived from the carboxyl end of the proenzyme. The post-translation cleavage follows an unusual pathway, termed non-hydrolytic serinolysis, in which the side chain hydroxyl group of the serine supplies its oxygen atom to form the C-terminus of the beta chain, while the remainder of the serine residue undergoes an oxidative deamination to produce ammonia and the pyruvoyl group blocking the N-terminus of the alpha chain.

It catalyses the reaction S-adenosyl-L-methionine + H(+) = S-adenosyl 3-(methylsulfanyl)propylamine + CO2. It functions in the pathway amine and polyamine biosynthesis; S-adenosylmethioninamine biosynthesis; S-adenosylmethioninamine from S-adenosyl-L-methionine: step 1/1. Catalyzes the decarboxylation of S-adenosylmethionine to S-adenosylmethioninamine (dcAdoMet), the propylamine donor required for the synthesis of the polyamines spermine and spermidine from the diamine putrescine. The polypeptide is S-adenosylmethionine decarboxylase proenzyme (Geobacillus kaustophilus (strain HTA426)).